The chain runs to 67 residues: Large ribosomal subunit protein bL35 (67 aa).

It belongs to the bacterial ribosomal protein bL35 family.

This Rhizobium etli (strain CIAT 652) protein is Large ribosomal subunit protein bL35.